Here is a 284-residue protein sequence, read N- to C-terminus: Deoxyribonuclease-1 (284 aa).

Residues 1–22 (MRAARLMGALLALAGLLQLALS) form the signal peptide. The N-linked (GlcNAc...) asparagine glycan is linked to N40. Residue E100 is part of the active site. Cysteines 123 and 126 form a disulfide. N-linked (GlcNAc...) asparagine glycosylation is present at N128. H156 is an active-site residue. C195 and C231 are joined by a disulfide.

It belongs to the DNase I family. It depends on Ca(2+) as a cofactor. The cofactor is Mg(2+).

It localises to the secreted. The protein localises to the zymogen granule. The protein resides in the nucleus envelope. It carries out the reaction Endonucleolytic cleavage to 5'-phosphodinucleotide and 5'-phosphooligonucleotide end-products.. Its function is as follows. Serum endocuclease secreted into body fluids by a wide variety of exocrine and endocrine organs. Expressed by non-hematopoietic tissues and preferentially cleaves protein-free DNA. Among other functions, seems to be involved in cell death by apoptosis. Binds specifically to G-actin and blocks actin polymerization. Together with DNASE1L3, plays a key role in degrading neutrophil extracellular traps (NETs). NETs are mainly composed of DNA fibers and are released by neutrophils to bind pathogens during inflammation. Degradation of intravascular NETs by DNASE1 and DNASE1L3 is required to prevent formation of clots that obstruct blood vessels and cause organ damage following inflammation. This is Deoxyribonuclease-1 (DNASE1) from Sus scrofa (Pig).